The sequence spans 185 residues: Ribosome-recycling factor (185 aa).

Positions 141–160 (RIQKDGEAGEDEVGRAEKEL) are disordered.

The protein belongs to the RRF family.

The protein resides in the cytoplasm. Functionally, responsible for the release of ribosomes from messenger RNA at the termination of protein biosynthesis. May increase the efficiency of translation by recycling ribosomes from one round of translation to another. This is Ribosome-recycling factor from Rhodococcus jostii (strain RHA1).